The primary structure comprises 302 residues: Recombination-associated protein RdgC (302 aa).

Belongs to the RdgC family.

It localises to the cytoplasm. Its subcellular location is the nucleoid. In terms of biological role, may be involved in recombination. The chain is Recombination-associated protein RdgC from Xylella fastidiosa (strain M23).